We begin with the raw amino-acid sequence, 159 residues long: Ribonuclease H (159 aa).

Residues 2–144 (SQDPVIIHTD…ADELATRGLQ (143 aa)) enclose the RNase H type-1 domain. Residues Asp-11, Glu-50, Asp-72, and Asp-136 each contribute to the Mg(2+) site.

Belongs to the RNase H family. As to quaternary structure, monomer. Mg(2+) serves as cofactor.

It is found in the cytoplasm. It carries out the reaction Endonucleolytic cleavage to 5'-phosphomonoester.. Its function is as follows. Endonuclease that specifically degrades the RNA of RNA-DNA hybrids. This is Ribonuclease H from Mycolicibacterium smegmatis (strain ATCC 700084 / mc(2)155) (Mycobacterium smegmatis).